Consider the following 812-residue polypeptide: Leucine--tRNA ligase (812 aa).

The 'HIGH' region signature appears at 40–51 (SYPSGSNLHAGH). A 'KMSKS' region motif is present at residues 572 to 576 (KMSKS). K575 contacts ATP.

It belongs to the class-I aminoacyl-tRNA synthetase family.

It is found in the cytoplasm. The enzyme catalyses tRNA(Leu) + L-leucine + ATP = L-leucyl-tRNA(Leu) + AMP + diphosphate. This is Leucine--tRNA ligase from Clostridium tetani (strain Massachusetts / E88).